A 242-amino-acid polypeptide reads, in one-letter code: Polycomb group RING finger protein 3 (242 aa).

The segment at 17 to 56 (CRLCNGYLIDATTVTECLHTFCRSCLVKYLEENNTCPTCR) adopts an RING-type zinc-finger fold. Residues 120 to 149 (EAHRNGETKTDEHTHKEPPEEKQEEDHDYH) are disordered.

As to quaternary structure, component of a PRC1-like complex.

The protein resides in the nucleus. Its function is as follows. Component of a Polycomb group (PcG) multiprotein PRC1-like complex, a complex class required to maintain the transcriptionally repressive state of many genes, including Hox genes, throughout development. PcG PRC1 complex acts via chromatin remodeling and modification of histones; it mediates monoubiquitination of histone H2A 'Lys-119', rendering chromatin heritably changed in its expressibility. Within the PRC1-like complex, regulates RNF2 ubiquitin ligase activity. The polypeptide is Polycomb group RING finger protein 3 (pcgf3) (Xenopus tropicalis (Western clawed frog)).